The chain runs to 274 residues: Large ribosomal subunit protein uL2 (274 aa).

Disordered stretches follow at residues 35 to 55 (FGKKSSGGRNNHGRITTRHRG) and 224 to 274 (AMNP…KLKG). Residues 45 to 55 (NHGRITTRHRG) are compositionally biased toward basic residues. A compositionally biased stretch (basic and acidic residues) spans 263 to 274 (KSSDKYIKKLKG).

The protein belongs to the universal ribosomal protein uL2 family. Part of the 50S ribosomal subunit. Forms a bridge to the 30S subunit in the 70S ribosome.

One of the primary rRNA binding proteins. Required for association of the 30S and 50S subunits to form the 70S ribosome, for tRNA binding and peptide bond formation. It has been suggested to have peptidyltransferase activity; this is somewhat controversial. Makes several contacts with the 16S rRNA in the 70S ribosome. The polypeptide is Large ribosomal subunit protein uL2 (Wolbachia pipientis subsp. Culex pipiens (strain wPip)).